The sequence spans 217 residues: MYGESLVKLMLALDVMDEKKAILIAKETSEYVDSIKIGYPLVLATGLNIIDKIKESTNKEVICDFKVADIPSTNEKIAELTLNHADGIICQGFVGSDSVSAILNVARAKNKKVIVVTEMSHPGATEYLQNVAEDMAKMADRLKVDGIVAPSTRPERLKEIKSIAKDAFVISPGVGAQGGNLSDVLNVLNENDYVIIGRAIYENENPKNAAKKYKIQM.

Substrate-binding positions include Asp14, Lys36, 64 to 73 (DFKVADIPST), Ser120, 172 to 182 (PGVGAQGGNLS), Gly197, and Arg198. The active-site Proton donor is the Lys66.

The protein belongs to the OMP decarboxylase family. Type 1 subfamily. As to quaternary structure, homodimer.

The catalysed reaction is orotidine 5'-phosphate + H(+) = UMP + CO2. It functions in the pathway pyrimidine metabolism; UMP biosynthesis via de novo pathway; UMP from orotate: step 2/2. Catalyzes the decarboxylation of orotidine 5'-monophosphate (OMP) to uridine 5'-monophosphate (UMP). The chain is Orotidine 5'-phosphate decarboxylase from Methanococcus maripaludis (strain DSM 14266 / JCM 13030 / NBRC 101832 / S2 / LL).